Here is a 179-residue protein sequence, read N- to C-terminus: MLKVEERYTNAVPELQKFFNYGNIMQVPKLVKVVINTGVGEAVSNSKAMETAEADIVAIAGQHPVVTRAKRSVANFKLRAGMPIGLKVTLRGQRMYDFLNKLFFITLPRVRDFQGVPNTAFDERGNYTLGFKDHSVFPEIDFNKIEKPRGLEICIVTTANTPEEGKKLLELLGMPFSKD.

Belongs to the universal ribosomal protein uL5 family. As to quaternary structure, part of the 50S ribosomal subunit; part of the 5S rRNA/L5/L18/L25 subcomplex. Contacts the 5S rRNA and the P site tRNA. Forms a bridge to the 30S subunit in the 70S ribosome.

Functionally, this is one of the proteins that bind and probably mediate the attachment of the 5S RNA into the large ribosomal subunit, where it forms part of the central protuberance. In the 70S ribosome it contacts protein S13 of the 30S subunit (bridge B1b), connecting the 2 subunits; this bridge is implicated in subunit movement. Contacts the P site tRNA; the 5S rRNA and some of its associated proteins might help stabilize positioning of ribosome-bound tRNAs. This is Large ribosomal subunit protein uL5 from Dehalococcoides mccartyi (strain ATCC BAA-2100 / JCM 16839 / KCTC 5957 / BAV1).